Consider the following 207-residue polypeptide: Cytochrome c biogenesis ATP-binding export protein CcmA (207 aa).

The ABC transporter domain maps to 3–206 (LMAEGLSARR…AKSLEMTGFV (204 aa)). Position 35–42 (35–42 (GPNGAGKS)) interacts with ATP.

The protein belongs to the ABC transporter superfamily. CcmA exporter (TC 3.A.1.107) family. In terms of assembly, the complex is composed of two ATP-binding proteins (CcmA) and two transmembrane proteins (CcmB).

The protein localises to the cell inner membrane. The catalysed reaction is heme b(in) + ATP + H2O = heme b(out) + ADP + phosphate + H(+). Its function is as follows. Part of the ABC transporter complex CcmAB involved in the biogenesis of c-type cytochromes; once thought to export heme, this seems not to be the case, but its exact role is uncertain. Responsible for energy coupling to the transport system. The protein is Cytochrome c biogenesis ATP-binding export protein CcmA of Rhizobium meliloti (strain 1021) (Ensifer meliloti).